The following is a 531-amino-acid chain: Acid-sensing ion channel 3 (531 aa).

The Cytoplasmic segment spans residues 1–43; that stretch reads MKPTSGPEEARRPASDIRVFASNCSMHGLGHVFGPGSLSLRRG. Residues 44–61 traverse the membrane as a helical segment; that stretch reads MWAAAVVLSVATFLYQVA. Residues 62–441 lie on the Extracellular side of the membrane; sequence ERVRYYREFH…SELLGDIGGQ (380 aa). Intrachain disulfides connect Cys92–Cys186, Cys164–Cys171, Cys282–Cys370, Cys315–Cys366, Cys319–Cys364, Cys328–Cys350, and Cys330–Cys342. Asn175 carries an N-linked (GlcNAc...) asparagine glycan. The segment at 285 to 307 is disordered; the sequence is ASLNPNYEPEPSDPLGSPSPSPS. Residue Asn398 is glycosylated (N-linked (GlcNAc...) asparagine). The chain crosses the membrane as a helical span at residues 442-460; the sequence is MGLFIGASLLTILEILDYL. Residues 447-449 carry the GAS motif; ion selectivity filter motif; sequence GAS. Over 461–531 the chain is Cytoplasmic; sequence CEVFRDKVLG…HRTCYLVTQL (71 aa). Positions 528–531 match the PDZ-binding motif; sequence VTQL.

The protein belongs to the amiloride-sensitive sodium channel (TC 1.A.6) family. ASIC3 subfamily. Can form homotrimeric channels. Heterotrimer; forms functional heterotrimers producing channel with different properties. Forms heterotrimers with ASIC2; gives rise to a biphasic current with a sustained current which discriminates poorly between Na(+) and K(+). Interacts with STOM; inhibits ASIC3 acid-evoked current. Interacts with LIN7B (via PDZ domain); increases ASIC3 expression at the plasma membrane. Interacts with MAGI1 (via PDZ domain); probably regulates ASIC3. Interacts with GOPC (via PDZ domain); probably regulates ASIC3. Interacts with DLG4 (via PDZ domain); reduces ASIC3 expression at the plasma membrane. Expressed by sensory neurons. Strongly expressed in brain, spinal cord, lung, lymph nodes, kidney, pituitary, heart and testis.

The protein localises to the cell membrane. It is found in the cytoplasm. The enzyme catalyses Na(+)(in) = Na(+)(out). The catalysed reaction is K(+)(in) = K(+)(out). It catalyses the reaction Ca(2+)(in) = Ca(2+)(out). Inhibited by the diuretic drug amiloride. Inhibited by the diuretic drug triamterene. Potentiated by the vertebrate neuropeptide FF (NPFF) and the related FMRFamide. Specifically and reversibly inhibited by the a sea anemone toxin APETx2. Forms pH-gated heterotrimeric sodium channels that act as postsynaptic excitatory receptors in the nervous system. Upon extracellular acidification, these channels generate a biphasic current with a fast inactivating and a slow sustained phase. ASIC3 is more sensitive to protons and gates between closed, open, and desensitized states faster than other ASICs. Displays high selectivity for sodium ions but can also permit the permeation of other cations. As a neuronal acid sensor, probably contributes to mechanoreception, acid nociception, and heat nociception. By forming heterotrimeric channels with ASIC2, generates a biphasic current with a fast inactivating and a slow sustained phase, which in sensory neurons is proposed to mediate the pain induced by acidosis that occurs in ischemic, damaged or inflamed tissues. This chain is Acid-sensing ion channel 3, found in Homo sapiens (Human).